Here is a 225-residue protein sequence, read N- to C-terminus: Probable molybdenum cofactor guanylyltransferase (225 aa).

GTP-binding positions include 20 to 22, K33, D88, and D117; that span reads LAG. D117 is a binding site for Mg(2+).

It belongs to the MobA family. Requires Mg(2+) as cofactor.

It localises to the cytoplasm. It catalyses the reaction Mo-molybdopterin + GTP + H(+) = Mo-molybdopterin guanine dinucleotide + diphosphate. Functionally, transfers a GMP moiety from GTP to Mo-molybdopterin (Mo-MPT) cofactor (Moco or molybdenum cofactor) to form Mo-molybdopterin guanine dinucleotide (Mo-MGD) cofactor. In Methanosarcina acetivorans (strain ATCC 35395 / DSM 2834 / JCM 12185 / C2A), this protein is Probable molybdenum cofactor guanylyltransferase.